The chain runs to 96 residues: Co-chaperonin GroES (96 aa).

Belongs to the GroES chaperonin family. As to quaternary structure, heptamer of 7 subunits arranged in a ring. Interacts with the chaperonin GroEL.

Its subcellular location is the cytoplasm. Functionally, together with the chaperonin GroEL, plays an essential role in assisting protein folding. The GroEL-GroES system forms a nano-cage that allows encapsulation of the non-native substrate proteins and provides a physical environment optimized to promote and accelerate protein folding. GroES binds to the apical surface of the GroEL ring, thereby capping the opening of the GroEL channel. This chain is Co-chaperonin GroES, found in Actinobacillus pleuropneumoniae serotype 3 (strain JL03).